Reading from the N-terminus, the 171-residue chain is Phosphinothricin N-acetyltransferase (171 aa).

The 165-residue stretch at 7-171 (VQVRPGVEED…WDVAWYERPL (165 aa)) folds into the N-acetyltransferase domain. Acetyl-CoA is bound by residues 94–96 (VYV), 102–107 (GRGIGS), and N133.

It belongs to the acetyltransferase family. PAT/BAR subfamily.

The catalysed reaction is phosphinothricin + acetyl-CoA = N-acetylphosphinothricin + CoA + H(+). Functionally, inactivates phosphinothricin (PPT) by transfer of an acetyl group from acetyl CoA. The physiological substrate could be a structurally related compound. In Streptomyces coelicolor (strain ATCC BAA-471 / A3(2) / M145), this protein is Phosphinothricin N-acetyltransferase.